The following is a 634-amino-acid chain: MSDAATRAEETSEGHSSSAIGLMVGAVGVCYGDIGTSPLYTLKEVFIGGYGVQANHDGVLGVLSLIFWSLVWVVSIKYVIFVLRADNQGEGGVMALSALARRAAAPFGRLQTFVVVAGLIGAALFYGDSMITPAISVLSAVEGLEIAFDGLEHWTVPLALIVLIGLFLIQKHGTARIGILFGPVMVLWFGALAALGVYGVIQQPEVLQAMNPVWAVRFFSSHPGIGVAILGATVLALTGAEALYADMGHFGRKPIARAWFLLVLPALVLNYFGQGATILSNAEAARNPFYLLAPGWALLPMVALSTLATVIASQAVISGAFSLTRQAIQLGYVPRMTIQHTSSHEQGQIYIGGVNWALMVGVVLLVLGFESSASLAAAYGVAVTGTMLITTLLMGVVIWRLWKWPLWLGVPFFCVMLAVDSLFFAANLPKVIQGGAFPVIAGIVIFILMSTWKRGRQLLVERLDEGSLPLSVFISSMRVQPPHRVQGTAVFLTARTDAVPHALLHNLLHNQVLHEQVVLLTVVNEDSPRVSPDRRFEVEAYGDGFFRVILHFGFMEEPDIPAALRLCHLNELDFSPMRTTYFLSRETVIPSKRIGMARWREGLFAFLLKNANGNLRYFNLPLNRVIELGTQVEI.

The next 12 helical transmembrane spans lie at alanine 19–leucine 39, valine 62–valine 82, phenylalanine 113–proline 133, glycine 150–glutamine 170, isoleucine 177–valine 197, isoleucine 225–alanine 245, tryptophan 259–leucine 279, leucine 291–isoleucine 311, isoleucine 349–phenylalanine 369, tyrosine 379–tryptophan 399, leucine 406–alanine 426, and valine 431–threonine 451.

It belongs to the HAK/KUP transporter (TC 2.A.72) family.

The protein resides in the cell inner membrane. It carries out the reaction K(+)(in) + H(+)(in) = K(+)(out) + H(+)(out). In terms of biological role, transport of potassium into the cell. Likely operates as a K(+):H(+) symporter. The sequence is that of Probable potassium transport system protein Kup from Pseudomonas aeruginosa (strain LESB58).